The chain runs to 1368 residues: DNA-directed RNA polymerase subunit beta (1368 aa).

Belongs to the RNA polymerase beta chain family. In terms of assembly, the RNAP catalytic core consists of 2 alpha, 1 beta, 1 beta' and 1 omega subunit. When a sigma factor is associated with the core the holoenzyme is formed, which can initiate transcription.

It catalyses the reaction RNA(n) + a ribonucleoside 5'-triphosphate = RNA(n+1) + diphosphate. Its function is as follows. DNA-dependent RNA polymerase catalyzes the transcription of DNA into RNA using the four ribonucleoside triphosphates as substrates. This is DNA-directed RNA polymerase subunit beta from Ralstonia nicotianae (strain ATCC BAA-1114 / GMI1000) (Ralstonia solanacearum).